The primary structure comprises 76 residues: Large ribosomal subunit protein bL31 (76 aa).

The protein belongs to the bacterial ribosomal protein bL31 family. Type A subfamily. As to quaternary structure, part of the 50S ribosomal subunit.

Functionally, binds the 23S rRNA. The polypeptide is Large ribosomal subunit protein bL31 (Gluconacetobacter diazotrophicus (strain ATCC 49037 / DSM 5601 / CCUG 37298 / CIP 103539 / LMG 7603 / PAl5)).